Here is a 176-residue protein sequence, read N- to C-terminus: Translation initiation factor IF-3 (176 aa).

It belongs to the IF-3 family. As to quaternary structure, monomer.

The protein resides in the cytoplasm. In terms of biological role, IF-3 binds to the 30S ribosomal subunit and shifts the equilibrium between 70S ribosomes and their 50S and 30S subunits in favor of the free subunits, thus enhancing the availability of 30S subunits on which protein synthesis initiation begins. This chain is Translation initiation factor IF-3, found in Streptococcus pyogenes serotype M4 (strain MGAS10750).